Reading from the N-terminus, the 149-residue chain is UPF0178 protein Psyc_0274 (149 aa).

Belongs to the UPF0178 family.

This Psychrobacter arcticus (strain DSM 17307 / VKM B-2377 / 273-4) protein is UPF0178 protein Psyc_0274.